Here is a 474-residue protein sequence, read N- to C-terminus: Bifunctional protein HldE (474 aa).

The segment at 1–317 (MKLSMPRFDQ…RRAIQRSEGS (317 aa)) is ribokinase. 194-197 (NLSE) is an ATP binding site. The active site involves Asp263. The interval 343 to 474 (FTNGCFDILH…AIVEKIRNNE (132 aa)) is cytidylyltransferase.

In the N-terminal section; belongs to the carbohydrate kinase PfkB family. It in the C-terminal section; belongs to the cytidylyltransferase family. Homodimer.

It carries out the reaction D-glycero-beta-D-manno-heptose 7-phosphate + ATP = D-glycero-beta-D-manno-heptose 1,7-bisphosphate + ADP + H(+). The catalysed reaction is D-glycero-beta-D-manno-heptose 1-phosphate + ATP + H(+) = ADP-D-glycero-beta-D-manno-heptose + diphosphate. It participates in nucleotide-sugar biosynthesis; ADP-L-glycero-beta-D-manno-heptose biosynthesis; ADP-L-glycero-beta-D-manno-heptose from D-glycero-beta-D-manno-heptose 7-phosphate: step 1/4. It functions in the pathway nucleotide-sugar biosynthesis; ADP-L-glycero-beta-D-manno-heptose biosynthesis; ADP-L-glycero-beta-D-manno-heptose from D-glycero-beta-D-manno-heptose 7-phosphate: step 3/4. Its function is as follows. Catalyzes the phosphorylation of D-glycero-D-manno-heptose 7-phosphate at the C-1 position to selectively form D-glycero-beta-D-manno-heptose-1,7-bisphosphate. In terms of biological role, catalyzes the ADP transfer from ATP to D-glycero-beta-D-manno-heptose 1-phosphate, yielding ADP-D-glycero-beta-D-manno-heptose. This Pseudomonas fluorescens (strain SBW25) protein is Bifunctional protein HldE.